The chain runs to 98 residues: MWARVLLLGVLLSLLADLHAASGGDAGGQKTWNPRISDCELPPEKGPCNNLELRWFYNLKSKRCERFFYGGCYGNANNFKEINECDRRCVSPDINKPG.

A signal peptide spans 1–23 (MWARVLLLGVLLSLLADLHAASG). The BPTI/Kunitz inhibitor domain maps to 39–89 (CELPPEKGPCNNLELRWFYNLKSKRCERFFYGGCYGNANNFKEINECDRRC). 3 disulfide bridges follow: Cys39–Cys89, Cys48–Cys72, and Cys64–Cys85.

The protein belongs to the venom Kunitz-type family. As to expression, expressed by the venom gland.

It localises to the secreted. Its function is as follows. Serine protease inhibitor. This is Kunitz-type serine protease inhibitor kunitoxin-Phi1 from Philodryas olfersii (Green snake).